The chain runs to 324 residues: Phospho-N-acetylmuramoyl-pentapeptide-transferase (324 aa).

A run of 10 helical transmembrane segments spans residues 5 to 25 (VMVL…PLFI), 50 to 70 (GTPT…TLLM), 77 to 97 (LSVE…LGFL), 117 to 137 (LIGQ…SGFS), 147 to 167 (LSIN…VGGS), 176 to 196 (LDGL…VLAW), 203 to 223 (IAIF…FNAH), 227 to 247 (VFMG…VAIL), 250 to 270 (LEIL…SVII), and 304 to 324 (VTFW…EVWI).

The protein belongs to the glycosyltransferase 4 family. MraY subfamily. Mg(2+) serves as cofactor.

The protein localises to the cell membrane. The enzyme catalyses UDP-N-acetyl-alpha-D-muramoyl-L-alanyl-gamma-D-glutamyl-meso-2,6-diaminopimeloyl-D-alanyl-D-alanine + di-trans,octa-cis-undecaprenyl phosphate = di-trans,octa-cis-undecaprenyl diphospho-N-acetyl-alpha-D-muramoyl-L-alanyl-D-glutamyl-meso-2,6-diaminopimeloyl-D-alanyl-D-alanine + UMP. It participates in cell wall biogenesis; peptidoglycan biosynthesis. In terms of biological role, catalyzes the initial step of the lipid cycle reactions in the biosynthesis of the cell wall peptidoglycan: transfers peptidoglycan precursor phospho-MurNAc-pentapeptide from UDP-MurNAc-pentapeptide onto the lipid carrier undecaprenyl phosphate, yielding undecaprenyl-pyrophosphoryl-MurNAc-pentapeptide, known as lipid I. The protein is Phospho-N-acetylmuramoyl-pentapeptide-transferase of Geobacillus sp. (strain WCH70).